The sequence spans 309 residues: Tagatose-6-phosphate kinase (309 aa).

This sequence belongs to the carbohydrate kinase PfkB family. LacC subfamily.

The enzyme catalyses D-tagatofuranose 6-phosphate + ATP = D-tagatofuranose 1,6-bisphosphate + ADP + H(+). Its pathway is carbohydrate metabolism; D-tagatose 6-phosphate degradation; D-glyceraldehyde 3-phosphate and glycerone phosphate from D-tagatose 6-phosphate: step 1/2. This Streptococcus pyogenes serotype M4 (strain MGAS10750) protein is Tagatose-6-phosphate kinase.